We begin with the raw amino-acid sequence, 140 residues long: Flagellar assembly factor FliW (140 aa).

Belongs to the FliW family. In terms of assembly, interacts with translational regulator CsrA and flagellin(s).

The protein localises to the cytoplasm. Functionally, acts as an anti-CsrA protein, binds CsrA and prevents it from repressing translation of its target genes, one of which is flagellin. Binds to flagellin and participates in the assembly of the flagellum. This Syntrophotalea carbinolica (strain DSM 2380 / NBRC 103641 / GraBd1) (Pelobacter carbinolicus) protein is Flagellar assembly factor FliW.